The sequence spans 558 residues: Serine palmitoyltransferase 2 (558 aa).

Residues 33 to 42 (HDDDEEEEEV) show a composition bias toward acidic residues. Positions 33 to 57 (HDDDEEEEEVKVDQGSEETTSSHDI) are disordered. Position 384 is an N6-(pyridoxal phosphate)lysine (K384).

It belongs to the class-II pyridoxal-phosphate-dependent aminotransferase family. In terms of assembly, heterodimer of sptl-1/sptl-2. Pyridoxal 5'-phosphate is required as a cofactor.

It catalyses the reaction L-serine + hexadecanoyl-CoA + H(+) = 3-oxosphinganine + CO2 + CoA. It functions in the pathway lipid metabolism; sphingolipid metabolism. Its function is as follows. Component of the serine palmitoyltransferase (SPT) that catalyzes the first committed step in sphingolipid biosynthesis, which is the condensation of an acyl-CoA species and L-serine. The catalytic core is composed of a heterodimer of sptl-1 and sptl-2 or sptl-1 and sptl-3. Required for the specification of abicobasal polarity and development of the gut lumen. The sequence is that of Serine palmitoyltransferase 2 (sptl-2) from Caenorhabditis elegans.